Consider the following 224-residue polypeptide: Protein PLANT CADMIUM RESISTANCE 6 (224 aa).

A helical membrane pass occupies residues 131 to 151 (GMLYGLICCLFAIPCVYTCTF).

It belongs to the cornifelin family.

The protein resides in the membrane. Functionally, may be involved in heavy metals transport. This Arabidopsis thaliana (Mouse-ear cress) protein is Protein PLANT CADMIUM RESISTANCE 6 (PCR6).